Reading from the N-terminus, the 256-residue chain is MSHPDLFSLSGARALVTGASRGIGLTLAKGLARYGAEVVLNGRNAESLDSAQSGFEAEGLKASTAVFDVTDQDAVIDGVAAIERDMGPIDILINNAGIQRRAPLEEFSRKDWDDLMSTNVNAVFFVGQAVARHMIPRGRGKIVNICSVQSELARPGIAPYTATKGAVKNLTKGMATDWGRHGLQINGLAPGYFATEMTERLVADEEFTDWLCKRTPAGRWGQVEELVGAAVFLSSRASSFVNGQVLMVDGGITVSL.

15-39 (LVTGASRGIGLTLAKGLARYGAEVV) is an NADP(+) binding site. Residue Ser147 coordinates substrate. The active-site Proton acceptor is the Tyr160.

The protein belongs to the short-chain dehydrogenases/reductases (SDR) family. Homodimer.

The protein resides in the cytoplasm. The catalysed reaction is D-gluconate + NADP(+) = 5-dehydro-D-gluconate + NADPH + H(+). Catalyzes the reversible NADP-dependent oxidation of gluconate to 5-ketogluconate. Is involved in the non-phosphorylative, ketogenic oxidation of glucose. Is almost inactive with NAD as cosubstrate. Displays high substrate specificity since D-Glucose, D-sorbitol, and D-mannitol are not oxidized by the enzyme, and 2-ketogluconate and L-sorbose are not reduced. Can accept D-fructose as a substrate, with a rate that is only 10% of the rate of 5-ketogluconate reduction. This is Gluconate 5-dehydrogenase from Gluconobacter oxydans (strain 621H) (Gluconobacter suboxydans).